A 761-amino-acid chain; its full sequence is Hyperosmolality-gated Ca2+ permeable channel 1.6 (761 aa).

10 helical membrane passes run 7–27 (IGVAAAINIVTAFAFLLAFAI), 101–121 (IYLLGLKIFFPIACVAFTTMV), 156–176 (PRFWVHLCMAYAITFWTCFIL), 375–395 (LIVGVAYFFLTFFFMIPIAFV), 419–439 (LLKSIIQGFLPGIALKIFLLF), 467–487 (FYMFQFINVFLGSIVTGTAFQ), 512–532 (ATFFITYIMVDGWAGVAGEIL), 583–603 (AAVSPILLPFILVFFGLAFVV), 630–650 (VVTALVVSQLLLMGLLSTKHA), and 653–673 (STPLLLVLPLLTIGFHKHCKN). Positions 718–731 (RVGEDPEPEEKLES) are enriched in basic and acidic residues. Residues 718–761 (RVGEDPEPEEKLESDMSPPDLVATKRWSWRNTPLPSKDSCREIP) are disordered.

It belongs to the CSC1 (TC 1.A.17) family.

The protein localises to the membrane. Acts as an osmosensitive calcium-permeable cation channel. The sequence is that of Hyperosmolality-gated Ca2+ permeable channel 1.6 from Arabidopsis thaliana (Mouse-ear cress).